The primary structure comprises 335 residues: MEQKQSKSVAIWLFLCSIMIVLMVGIGGFTRLSKAGLSITEWNPITGAFPPLNERDWLQEKSKYETTPEYKTFNYGMSMEEFRTLYLIEYVHRLFARLTGLIFILPFIYFTLKKRISKKVVIRLSIALSFGVLQAFTGWYMVKSGLVAKPHVSHYMLTLHLLLALVIFALLSYQFFNYQVRQKQTKLKISGSTVHYVGIILILIVVQIIFGAFVAGLNAGLIYNTFPLMGGHIIPKDLFFLQPTWLNIFENRATVQFIHRTLALLILVLTTVLTIKNASVKSVYVMLLSVIIQIILGVVTLLLHIPITIAISHQMFSFILFGSGLCFLCYLRKQN.

The next 8 helical transmembrane spans lie at Val9–Phe29, Tyr90–Phe110, Val120–Tyr140, Met156–Phe176, Val197–Leu217, Val255–Ile275, Val283–Leu303, and Ile309–Cys329. His259 is a binding site for heme. Position 313 (His313) interacts with heme.

This sequence belongs to the COX15/CtaA family. Type 2 subfamily. Interacts with CtaB. Heme b serves as cofactor.

The protein resides in the cell membrane. It catalyses the reaction Fe(II)-heme o + 2 A + H2O = Fe(II)-heme a + 2 AH2. It functions in the pathway porphyrin-containing compound metabolism; heme A biosynthesis; heme A from heme O: step 1/1. Functionally, catalyzes the conversion of heme O to heme A by two successive hydroxylations of the methyl group at C8. The first hydroxylation forms heme I, the second hydroxylation results in an unstable dihydroxymethyl group, which spontaneously dehydrates, resulting in the formyl group of heme A. In Wolbachia sp. subsp. Brugia malayi (strain TRS), this protein is Heme A synthase.